We begin with the raw amino-acid sequence, 235 residues long: 2-C-methyl-D-erythritol 4-phosphate cytidylyltransferase (235 aa).

Belongs to the IspD/TarI cytidylyltransferase family. IspD subfamily.

It carries out the reaction 2-C-methyl-D-erythritol 4-phosphate + CTP + H(+) = 4-CDP-2-C-methyl-D-erythritol + diphosphate. It participates in isoprenoid biosynthesis; isopentenyl diphosphate biosynthesis via DXP pathway; isopentenyl diphosphate from 1-deoxy-D-xylulose 5-phosphate: step 2/6. Functionally, catalyzes the formation of 4-diphosphocytidyl-2-C-methyl-D-erythritol from CTP and 2-C-methyl-D-erythritol 4-phosphate (MEP). The sequence is that of 2-C-methyl-D-erythritol 4-phosphate cytidylyltransferase from Pseudomonas fluorescens (strain SBW25).